A 355-amino-acid chain; its full sequence is Aminopeptidase N (355 aa).

Substrate is bound by residues Glu-156 and Gly-290–Asn-294. Residue His-326 coordinates Zn(2+). Glu-327 serves as the catalytic Proton acceptor. 2 residues coordinate Zn(2+): His-330 and Glu-349. Position 349 (Glu-349) interacts with substrate.

The protein belongs to the peptidase M1 family. Zn(2+) serves as cofactor.

Its subcellular location is the cytoplasm. It catalyses the reaction Release of an N-terminal amino acid, Xaa-|-Yaa- from a peptide, amide or arylamide. Xaa is preferably Ala, but may be most amino acids including Pro (slow action). When a terminal hydrophobic residue is followed by a prolyl residue, the two may be released as an intact Xaa-Pro dipeptide.. Aminopeptidase N is involved in the degradation of intracellular peptides generated by protein breakdown during normal growth as well as in response to nutrient starvation. This is Aminopeptidase N (pepN) from Acetobacter pasteurianus (Acetobacter turbidans).